A 309-amino-acid chain; its full sequence is MAAQVRVLRQRIRAAKSMKKITKAMELVATSRIAKAQEQVAASLPYSRAITEVLTALASNTRIDHPLLTPRERVRRAGVLLVTSDRGLAGGYSSNAIKTAESLLARLRADGKEPSLYVIGRKGVQYYRFRNRPMMACWTGFSEQPTFADAREVGETLIKAFTAGVDDGDGDPGPDGVFGVDELHIVSTEFKSLMTQVPVPKILGPMQIEDRPRSEGILPAYEFEPEAEALLDALLPKYINTRIYAALVESAASESASRRRAMKSATDNAEEMIEKYTREMNSARQAGITQEISEIVGGANALAASGSEV.

It belongs to the ATPase gamma chain family. F-type ATPases have 2 components, CF(1) - the catalytic core - and CF(0) - the membrane proton channel. CF(1) has five subunits: alpha(3), beta(3), gamma(1), delta(1), epsilon(1). CF(0) has three main subunits: a, b and c.

It is found in the cell membrane. Its function is as follows. Produces ATP from ADP in the presence of a proton gradient across the membrane. The gamma chain is believed to be important in regulating ATPase activity and the flow of protons through the CF(0) complex. In Salinispora tropica (strain ATCC BAA-916 / DSM 44818 / JCM 13857 / NBRC 105044 / CNB-440), this protein is ATP synthase gamma chain.